Reading from the N-terminus, the 213-residue chain is Putative manganese efflux pump MntP (213 aa).

7 helical membrane-spanning segments follow: residues 6 to 26 (LGVL…GIGM), 34 to 54 (AFML…FGIL), 58 to 78 (ALGL…LFFL), 107 to 127 (GSGG…LFAP), 132 to 152 (LVVI…SLGT), 153 to 173 (VGAQ…IMTV), and 192 to 212 (LAGG…SASP).

The protein belongs to the MntP (TC 9.B.29) family.

The protein localises to the cell membrane. In terms of biological role, probably functions as a manganese efflux pump. The polypeptide is Putative manganese efflux pump MntP (Heliobacterium modesticaldum (strain ATCC 51547 / Ice1)).